The primary structure comprises 993 residues: Signal peptide, CUB and EGF-like domain-containing protein 3 (993 aa).

An N-terminal signal peptide occupies residues 1 to 20 (MGSGRVPGLCLLLLLVHARA). An EGF-like 1; calcium-binding domain is found at 29 to 69 (DVDECVEGTDNCHIDAICQNTPRSYKCICKSGYTGDGKHCK). Intrachain disulfides connect Cys-33-Cys-46, Cys-40-Cys-55, Cys-57-Cys-68, Cys-74-Cys-86, Cys-82-Cys-95, Cys-97-Cys-110, Cys-116-Cys-127, Cys-123-Cys-136, Cys-161-Cys-172, Cys-168-Cys-182, Cys-184-Cys-197, Cys-201-Cys-212, Cys-208-Cys-221, Cys-223-Cys-236, Cys-240-Cys-251, Cys-247-Cys-260, Cys-262-Cys-275, Cys-281-Cys-292, Cys-288-Cys-301, Cys-303-Cys-316, Cys-322-Cys-332, Cys-328-Cys-341, Cys-343-Cys-355, Cys-361-Cys-372, Cys-368-Cys-381, and Cys-383-Cys-397. Residues 70-111 (DVDECEREDNAGCVHDCVNIPGNYRCTCYDGFHLAHDGHNCL) enclose the EGF-like 2; calcium-binding domain. Positions 112-148 (DVDECAEGNGGCQQSCVNMMGSYECHCRDGFFLSDNQ) constitute an EGF-like 3; calcium-binding domain. 3 consecutive EGF-like domains span residues 157 to 198 (EGMN…RDCK), 199 to 237 (LTCNYGNGGCQHTCDDTEQGPRCGCHVKFVLHTDGKTCI), and 238 to 276 (ETCAVNNGGCDSKCHDAATGVHCSCPVGFMLQPDRKTCK). In terms of domain architecture, EGF-like 7; calcium-binding spans 277–317 (DIDECRLNNGGCDHICRNTVGSFECSCKKGYKLLINERSCQ). The EGF-like 8; calcium-binding domain maps to 318-356 (DIDECSFDRTCDHMCVNTPGSFQCLCHRGYLLYGVTHCG). In terms of domain architecture, EGF-like 9; calcium-binding spans 357–398 (DVDECSINKGGCRFGCINTPGSYQCTCPAGQGRLHWNGKDCT). 5 N-linked (GlcNAc...) asparagine glycosylation sites follow: Asn-417, Asn-464, Asn-685, Asn-756, and Asn-785. 2 cysteine pairs are disulfide-bonded: Cys-804/Cys-830 and Cys-857/Cys-878. The 113-residue stretch at 804-916 (CGGELGEFTG…RGFQIPYVTY (113 aa)) folds into the CUB domain.

Forms homooligomers. Forms heterooligomers with SCUBE1 and SCUBE2. Interacts with TGFBR2 through the CUB domain; this interaction does not affect TGFB1-binding to TGFBR2. Interacts with BMP2, BMP4 and BMP7; the interaction is mediated by the CUB domain. Interacts with BMPR1A, BMPR1B and BMPR2; the interaction with BMPR1A and BMPR1B is BMP2- and BMP4-dependent. N-glycosylated. In terms of processing, proteolytic cleavage produces a CUB-containing C-terminal fragment that retains the ability to bind to TGFBR2. This reaction is catalyzed in vitro by MMP2 and, to a lesser extent, by MMP9. Highly expressed in femur and humerus with little or no expression in non-bone tissues.

Its subcellular location is the secreted. The protein localises to the cell surface. In terms of biological role, is a positive regulator of the BMP signaling pathway, required for proper chondrogenesis, osteogenesis and skeletal development. It acts as a coreceptor for BMP ligands, particularly BMP2 and BMP4, facilitating their interactions with BMP type I receptors. It is required for ligand-induced recruitment of BMP receptors to lipid rafts. Binds to TGFBR2 and activates TGFB signaling. This Mus musculus (Mouse) protein is Signal peptide, CUB and EGF-like domain-containing protein 3.